The chain runs to 31 residues: Cytochrome b6-f complex subunit 6 (31 aa).

A helical transmembrane segment spans residues 3–23 (AIVAYIGFLALFTGIAAGLLF).

This sequence belongs to the PetL family. The 4 large subunits of the cytochrome b6-f complex are cytochrome b6, subunit IV (17 kDa polypeptide, PetD), cytochrome f and the Rieske protein, while the 4 small subunits are PetG, PetL, PetM and PetN. The complex functions as a dimer.

It is found in the cellular thylakoid membrane. Functionally, component of the cytochrome b6-f complex, which mediates electron transfer between photosystem II (PSII) and photosystem I (PSI), cyclic electron flow around PSI, and state transitions. PetL is important for photoautotrophic growth as well as for electron transfer efficiency and stability of the cytochrome b6-f complex. The chain is Cytochrome b6-f complex subunit 6 from Nostoc sp. (strain PCC 7120 / SAG 25.82 / UTEX 2576).